The sequence spans 554 residues: Phenylalanine--tRNA ligase beta subunit (554 aa).

The B5 domain occupies 276 to 351 (LSLKSRMISV…INYGYEKFEG (76 aa)). The Mg(2+) site is built by Asp-329, Asp-335, Glu-338, and Glu-339.

This sequence belongs to the phenylalanyl-tRNA synthetase beta subunit family. Type 2 subfamily. In terms of assembly, tetramer of two alpha and two beta subunits. Requires Mg(2+) as cofactor.

It localises to the cytoplasm. It catalyses the reaction tRNA(Phe) + L-phenylalanine + ATP = L-phenylalanyl-tRNA(Phe) + AMP + diphosphate + H(+). This chain is Phenylalanine--tRNA ligase beta subunit, found in Methanococcus maripaludis (strain C5 / ATCC BAA-1333).